Reading from the N-terminus, the 396-residue chain is NADH-quinone oxidoreductase subunit D (396 aa).

The protein belongs to the complex I 49 kDa subunit family. In terms of assembly, NDH-1 is composed of 14 different subunits. Subunits NuoB, C, D, E, F, and G constitute the peripheral sector of the complex.

It is found in the cell inner membrane. The enzyme catalyses a quinone + NADH + 5 H(+)(in) = a quinol + NAD(+) + 4 H(+)(out). NDH-1 shuttles electrons from NADH, via FMN and iron-sulfur (Fe-S) centers, to quinones in the respiratory chain. The immediate electron acceptor for the enzyme in this species is believed to be ubiquinone. Couples the redox reaction to proton translocation (for every two electrons transferred, four hydrogen ions are translocated across the cytoplasmic membrane), and thus conserves the redox energy in a proton gradient. This Chelativorans sp. (strain BNC1) protein is NADH-quinone oxidoreductase subunit D.